We begin with the raw amino-acid sequence, 290 residues long: Protease HtpX (290 aa).

The next 2 membrane-spanning stretches (helical) occupy residues 12–32 (IAVM…GLLA) and 42–62 (ALLV…LLIS). A Zn(2+)-binding site is contributed by His-147. The active site involves Glu-148. His-151 lines the Zn(2+) pocket. 2 helical membrane-spanning segments follow: residues 162–182 (LIQG…GHVV) and 197–217 (FWIV…MIVM). Zn(2+) is bound at residue Glu-224.

This sequence belongs to the peptidase M48B family. Zn(2+) is required as a cofactor.

It is found in the cell inner membrane. The protein is Protease HtpX of Pseudoalteromonas atlantica (strain T6c / ATCC BAA-1087).